Consider the following 482-residue polypeptide: tRNA sulfurtransferase (482 aa).

Positions 61–165 (LAIRDALTRI…DDRLLLIKGR (105 aa)) constitute a THUMP domain. Residues 183–184 (LI), Lys265, Gly287, and Gln296 each bind ATP. The cysteines at positions 344 and 456 are disulfide-linked. A Rhodanese domain is found at 404–482 (FGPNDVILDI…GFNNVKVYRP (79 aa)). Cys456 acts as the Cysteine persulfide intermediate in catalysis.

Belongs to the ThiI family.

The protein resides in the cytoplasm. The enzyme catalyses [ThiI sulfur-carrier protein]-S-sulfanyl-L-cysteine + a uridine in tRNA + 2 reduced [2Fe-2S]-[ferredoxin] + ATP + H(+) = [ThiI sulfur-carrier protein]-L-cysteine + a 4-thiouridine in tRNA + 2 oxidized [2Fe-2S]-[ferredoxin] + AMP + diphosphate. It catalyses the reaction [ThiS sulfur-carrier protein]-C-terminal Gly-Gly-AMP + S-sulfanyl-L-cysteinyl-[cysteine desulfurase] + AH2 = [ThiS sulfur-carrier protein]-C-terminal-Gly-aminoethanethioate + L-cysteinyl-[cysteine desulfurase] + A + AMP + 2 H(+). Its pathway is cofactor biosynthesis; thiamine diphosphate biosynthesis. In terms of biological role, catalyzes the ATP-dependent transfer of a sulfur to tRNA to produce 4-thiouridine in position 8 of tRNAs, which functions as a near-UV photosensor. Also catalyzes the transfer of sulfur to the sulfur carrier protein ThiS, forming ThiS-thiocarboxylate. This is a step in the synthesis of thiazole, in the thiamine biosynthesis pathway. The sulfur is donated as persulfide by IscS. The protein is tRNA sulfurtransferase of Escherichia coli (strain 55989 / EAEC).